Here is a 708-residue protein sequence, read N- to C-terminus: Alpha-galactosidase (708 aa).

The active-site Nucleophile is the D441. D505 functions as the Proton donor in the catalytic mechanism.

It belongs to the glycosyl hydrolase 36 family. As to quaternary structure, homotetramer.

It catalyses the reaction Hydrolysis of terminal, non-reducing alpha-D-galactose residues in alpha-D-galactosides, including galactose oligosaccharides, galactomannans and galactolipids.. In Escherichia coli, this protein is Alpha-galactosidase (rafA).